The primary structure comprises 199 residues: Thymidine kinase (199 aa).

ATP contacts are provided by residues 23-30 (GSMFSGKT) and 95-98 (DEAQ). E96 functions as the Proton acceptor in the catalytic mechanism. The Zn(2+) site is built by C152, C155, C184, and C187.

The protein belongs to the thymidine kinase family. Homotetramer.

It is found in the cytoplasm. The catalysed reaction is thymidine + ATP = dTMP + ADP + H(+). In Bacteroides fragilis (strain YCH46), this protein is Thymidine kinase.